Here is a 370-residue protein sequence, read N- to C-terminus: Chaperone protein DnaJ (370 aa).

A J domain is found at 6-70; sequence DYYEVLGVQR…EKRSMYDRFG (65 aa). The segment at 128–208 adopts a CR-type zinc-finger fold; sequence GVEKTIEFRR…CRGEGRVRQT (81 aa). Residues Cys141, Cys144, Cys158, Cys161, Cys182, Cys185, Cys196, and Cys199 each coordinate Zn(2+). CXXCXGXG motif repeat units follow at residues 141–148, 158–165, 182–189, and 196–203; these read CPACRGSG, CPKCGGLG, CDMCRGEG, and CRECRGEG.

Belongs to the DnaJ family. In terms of assembly, homodimer. Zn(2+) serves as cofactor.

It localises to the cytoplasm. Functionally, participates actively in the response to hyperosmotic and heat shock by preventing the aggregation of stress-denatured proteins and by disaggregating proteins, also in an autonomous, DnaK-independent fashion. Unfolded proteins bind initially to DnaJ; upon interaction with the DnaJ-bound protein, DnaK hydrolyzes its bound ATP, resulting in the formation of a stable complex. GrpE releases ADP from DnaK; ATP binding to DnaK triggers the release of the substrate protein, thus completing the reaction cycle. Several rounds of ATP-dependent interactions between DnaJ, DnaK and GrpE are required for fully efficient folding. Also involved, together with DnaK and GrpE, in the DNA replication of plasmids through activation of initiation proteins. The chain is Chaperone protein DnaJ from Roseiflexus sp. (strain RS-1).